A 1191-amino-acid polypeptide reads, in one-letter code: Protogenin (1191 aa).

An N-terminal signal peptide occupies residues methionine 1 to serine 23. Ig-like domains follow at residues valine 24–threonine 124, serine 126–threonine 216, proline 229–threonine 316, and proline 321–threonine 405. The Extracellular portion of the chain corresponds to valine 24–threonine 943. 2 disulfides stabilise this stretch: cysteine 54–cysteine 107 and cysteine 150–cysteine 199. A glycan (N-linked (GlcNAc...) asparagine) is linked at asparagine 237. Disulfide bonds link cysteine 250/cysteine 298 and cysteine 342/cysteine 389. Fibronectin type-III domains follow at residues alanine 415–aspartate 509, proline 511–alanine 607, alanine 612–arginine 711, proline 718–glutamate 811, and proline 816–lysine 911. N-linked (GlcNAc...) asparagine glycosylation is present at asparagine 624. The chain crosses the membrane as a helical span at residues glycine 944–isoleucine 964. At tyrosine 965–valine 1191 the chain is on the cytoplasmic side. 2 disordered regions span residues serine 975–glutamate 1010 and isoleucine 1079–valine 1191. Residues threonine 977–alanine 990 are compositionally biased toward polar residues. Positions aspartate 1104 to histidine 1132 are enriched in basic and acidic residues. Polar residues-rich tracts occupy residues serine 1135 to proline 1146 and glutamate 1171 to alanine 1180.

This sequence belongs to the immunoglobulin superfamily. DCC family. From mid-gastrulation to early somite stages, restricted to posterior neural plate and mesoderm with an anterior limit at the level of the rhombencephalon. Posterior restriction is progressively lost during somitogenesis. Expression is maintained in the neural tube and paraxial mesoderm during this process. As development proceeds, further restricted to the dorsal parts of the spinal cord and somites. In parallel, expression progresses caudally during axis elongation.

The protein resides in the membrane. In terms of biological role, may play a role in anteroposterior axis elongation. In Mus musculus (Mouse), this protein is Protogenin.